The primary structure comprises 195 residues: Myelin-associated neurite-outgrowth inhibitor (195 aa).

Residues 1–18 (MNPVYSPGSSGVPYANAK) lie on the Cytoplasmic side of the membrane. The helical transmembrane segment at 19 to 43 (GIGYPAGFPMGYAAAAPAYSPNMYA) threads the bilayer. Residues 44-143 (GPNPAFQPGY…APIPQPRGNG (100 aa)) lie on the Extracellular side of the membrane. Residues 144–162 (VAMGMVAGTTMAMSAGTLL) form a helical membrane-spanning segment. The Cytoplasmic portion of the chain corresponds to 163–195 (TSHYPTPVAPHQVTMPTYRPPGTPTYSYVPPQW).

This sequence belongs to the FAM168 family.

It is found in the cytoplasm. The protein resides in the perinuclear region. Its subcellular location is the cell membrane. The protein localises to the cell projection. It localises to the axon. Its function is as follows. Inhibitor of neuronal axonal outgrowth. In Xenopus tropicalis (Western clawed frog), this protein is Myelin-associated neurite-outgrowth inhibitor (fam168b).